The chain runs to 357 residues: Serine/threonine-protein kinase nekl-2 (357 aa).

The Protein kinase domain maps to 4–267 (YEKVRVVGRG…VSQLLSDPLV (264 aa)). ATP contacts are provided by residues 10 to 18 (VGRGAFGVC) and Lys35. Asp137 (proton acceptor) is an active-site residue. Positions 281 to 290 (IEPPPTDKRK) are enriched in basic and acidic residues. The interval 281 to 357 (IEPPPTDKRK…QSRSQVHSKY (77 aa)) is disordered. 2 stretches are compositionally biased toward polar residues: residues 293-327 (ASLSSRLRTYPTQSTLRPYSLSSNAPTTHLTQLTP) and 336-357 (FFSSGRTSNQRTQSRSQVHSKY).

This sequence belongs to the protein kinase superfamily. NEK Ser/Thr protein kinase family. NIMA subfamily. Mg(2+) is required as a cofactor. Expressed in hypodermal cells including in hyp7 syncytium but not in seam cells.

It is found in the cytoplasm. It carries out the reaction L-seryl-[protein] + ATP = O-phospho-L-seryl-[protein] + ADP + H(+). The enzyme catalyses L-threonyl-[protein] + ATP = O-phospho-L-threonyl-[protein] + ADP + H(+). Its function is as follows. Probable serine/threonine-protein kinase required for the completion of molting. May play a role in endocytosis in the hypodermis syncytium. The polypeptide is Serine/threonine-protein kinase nekl-2 (Caenorhabditis elegans).